Reading from the N-terminus, the 102-residue chain is Small ribosomal subunit protein uS10 (102 aa).

The protein belongs to the universal ribosomal protein uS10 family. In terms of assembly, part of the 30S ribosomal subunit.

Its function is as follows. Involved in the binding of tRNA to the ribosomes. This chain is Small ribosomal subunit protein uS10, found in Hyperthermus butylicus (strain DSM 5456 / JCM 9403 / PLM1-5).